The sequence spans 60 residues: Metallothionein A (60 aa).

The segment at 1-28 is beta; that stretch reads MDPCDCSKSGTCNCGGSCTCTNCSCKSC. A divalent metal cation contacts are provided by Cys-4, Cys-6, Cys-12, Cys-14, Cys-18, Cys-20, Cys-23, Cys-25, Cys-28, Cys-32, Cys-33, Cys-35, Cys-36, Cys-40, Cys-43, Cys-47, Cys-49, Cys-54, Cys-58, and Cys-59. The alpha stretch occupies residues 29–60; it reads KKSCCPCCPSGCTKCASGCVCKGKTCDTSCCQ.

The protein belongs to the metallothionein superfamily. Type 1 family.

Metallothioneins have a high content of cysteine residues that bind various heavy metals. The sequence is that of Metallothionein A (mta) from Chionodraco hamatus (Antarctic teleost icefish).